Here is a 499-residue protein sequence, read N- to C-terminus: Glycerol kinase (499 aa).

ADP is bound at residue threonine 11. Residues threonine 11, serine 12, and serine 13 each coordinate ATP. Threonine 11 is a sn-glycerol 3-phosphate binding site. Arginine 15 provides a ligand contact to ADP. Sn-glycerol 3-phosphate-binding residues include arginine 81, glutamate 82, tyrosine 133, and aspartate 242. Arginine 81, glutamate 82, tyrosine 133, aspartate 242, and glutamine 243 together coordinate glycerol. Positions 264 and 309 each coordinate ADP. Residues threonine 264, glycine 309, glutamine 313, and glycine 414 each coordinate ATP. Glycine 414 and asparagine 418 together coordinate ADP.

Belongs to the FGGY kinase family.

It catalyses the reaction glycerol + ATP = sn-glycerol 3-phosphate + ADP + H(+). Its pathway is polyol metabolism; glycerol degradation via glycerol kinase pathway; sn-glycerol 3-phosphate from glycerol: step 1/1. With respect to regulation, inhibited by fructose 1,6-bisphosphate (FBP). Its function is as follows. Key enzyme in the regulation of glycerol uptake and metabolism. Catalyzes the phosphorylation of glycerol to yield sn-glycerol 3-phosphate. The protein is Glycerol kinase of Methylibium petroleiphilum (strain ATCC BAA-1232 / LMG 22953 / PM1).